We begin with the raw amino-acid sequence, 227 residues long: Lysosomal-associated transmembrane protein 4B (227 aa).

Helical transmembrane passes span 26–46 (ILLG…LLSA), 72–92 (MCIA…ATYG), 100–120 (WIIP…LVAI), and 153–173 (CLVL…GYLI). Residues 205–222 (PPYDDATAVPSTAKEPPP) are required for NEDD4 interaction.

The protein belongs to the LAPTM4/LAPTM5 transporter family. As to quaternary structure, homooligomer; upon reaching the lysosomes. Interacts with MCOLN1. Interacts with NEDD4; may play a role in the lysosomal sorting of LAPTM4B; enhances HGS association with NEDD4; mediates inhibition of EGFR degradation. Interacts with PIP5K1C; promotes SNX5 association with LAPTM4B; kinase activity of PIP5K1C is required; interaction is regulated by phosphatidylinositol 4,5-bisphosphate generated by PIP5K1C. Interacts with HGS; promotes HGS ubiquitination. Interacts with SNX5. Interacts with SLC3A2 and SLC7A5; recruits SLC3A2 and SLC7A5 to lysosomes to promote leucine uptake into these organelles and is required for mTORC1 activation. Interacts with LRRC32; decreases TGFB1 production in regulatory T cells. Interacts with BECN1; competes with EGFR for LAPTM4B binding; regulates EGFR activity. Interacts with EGFR; positively correlates with EGFR activation. Post-translationally, undergoes proteolytic cleavage following delivery to the lysosomes. Ubiquitinated by NEDD4.

It localises to the endomembrane system. The protein resides in the late endosome membrane. Its subcellular location is the cell membrane. The protein localises to the cell projection. It is found in the lysosome membrane. It localises to the endosome membrane. The protein resides in the endosome. Its subcellular location is the multivesicular body membrane. The protein localises to the multivesicular body lumen. Its function is as follows. Required for optimal lysosomal function. Blocks EGF-stimulated EGFR intraluminal sorting and degradation. Conversely by binding with the phosphatidylinositol 4,5-bisphosphate, regulates its PIP5K1C interaction, inhibits HGS ubiquitination and relieves LAPTM4B inhibition of EGFR degradation. Recruits SLC3A2 and SLC7A5 (the Leu transporter) to the lysosome, promoting entry of leucine and other essential amino acid (EAA) into the lysosome, stimulating activation of proton-transporting vacuolar (V)-ATPase protein pump (V-ATPase) and hence mTORC1 activation. Plays a role as negative regulator of TGFB1 production in regulatory T cells. Binds ceramide and facilitates its exit from late endosome in order to control cell death pathways. The polypeptide is Lysosomal-associated transmembrane protein 4B (Mus musculus (Mouse)).